Reading from the N-terminus, the 179-residue chain is DELTA-actitoxin-Afr1a (179 aa).

The interval 1–29 (SADVAGAVIDGAGLGFDVLKTVLEALGNV) is N-terminal alpha-helix that contributes to the pore. Position 31 (Arg-31) interacts with an N-(acyl)-sphingosylphosphocholine. Tyr-51 and Arg-53 together coordinate N-acetyl-D-glucosamine 6-sulfate. 13 residues coordinate an N-(acyl)-sphingosylphosphocholine: Arg-53, Ser-54, Arg-79, Gly-85, Tyr-108, Tyr-113, Ser-114, Trp-116, Tyr-133, Tyr-137, Tyr-138, Arg-144, and Gly-168. The interval 105 to 120 (SVPYDYNWYSNWWNVR) is trp-rich region, which is important for the binding to lipid membrane. Tyr-138 provides a ligand contact to N-acetyl-D-glucosamine 6-sulfate. Positions 144 to 146 (RGD) match the Cell attachment site, crucial for protein stability motif.

The protein belongs to the actinoporin family. Sea anemone subfamily. In terms of assembly, octamer or nonamer in membranes. Monomer in the soluble state.

Its subcellular location is the secreted. The protein resides in the nematocyst. It is found in the target cell membrane. Functionally, pore-forming toxin (PFT) that consists of a crown-shaped octamer or nonamer that forms cation-selective hydrophilic pores of about 1.5 nm (inside) and 13 nm (outside). It causes cardiac stimulation and cytolysis (EC(50)=1.6 nM on erythrocytes). Interestingly, the Phe-16 is crucial for hemolysis. Pore formation is a multi-step process that involves specific recognition of membrane sphingomyelin (but neither cholesterol nor phosphatidylcholine) using aromatic rich region and adjacent phosphocholine (POC) binding site, firm binding to the membrane (mainly driven by hydrophobic interactions) accompanied by the transfer of the N-terminal region to the lipid-water interface and finally pore formation after oligomerization of monomers. It is probable that a dimeric form is an assembly intermediate before the complete oligomerization. The formation of stable pores occurs only in vesicles composed of DOPC/SM (there is no oligomerization when the PFT is treated with vesicles of DOPC or SM alone). The transmembrane pore displays 8 lateral perforations, one at each subunit-subunit interface, partially occupied by the acyl-chain region of a bridging lipid. Each pore contains 24 lipid molecules, firmly bound to each subunit, that is, 3 lipids (L1, L2, L3, L4 and/or L5) are associated to each subunit. Lipid L1 bridges 2 subunits, whereas lipids L2 and L3 bind to sites at single subunit. This Actinia fragacea (Strawberry anemone) protein is DELTA-actitoxin-Afr1a.